Here is a 201-residue protein sequence, read N- to C-terminus: Recombination protein RecR (201 aa).

The C4-type zinc finger occupies 60 to 75 (CHECGNVDTSDPCTIC). The Toprim domain maps to 83–178 (SILVVVEDVS…KVTKLAHGVP (96 aa)).

It belongs to the RecR family.

Its function is as follows. May play a role in DNA repair. It seems to be involved in an RecBC-independent recombinational process of DNA repair. It may act with RecF and RecO. This chain is Recombination protein RecR, found in Methylobacterium nodulans (strain LMG 21967 / CNCM I-2342 / ORS 2060).